A 348-amino-acid chain; its full sequence is GTPase Obg (348 aa).

An Obg domain is found at 1–159; that stretch reads MKFLDQARIY…MTLWLRLKLI (159 aa). The 168-residue stretch at 160–327 folds into the OBG-type G domain; the sequence is ADAGLVGLPN…TLQSLLAAID (168 aa). GTP is bound by residues 166-173, 191-195, 212-215, 279-282, and 308-310; these read GLPNAGKS, FTTLH, DIPG, SKID, and SAA. 2 residues coordinate Mg(2+): S173 and T193.

It belongs to the TRAFAC class OBG-HflX-like GTPase superfamily. OBG GTPase family. In terms of assembly, monomer. Requires Mg(2+) as cofactor.

It is found in the cytoplasm. In terms of biological role, an essential GTPase which binds GTP, GDP and possibly (p)ppGpp with moderate affinity, with high nucleotide exchange rates and a fairly low GTP hydrolysis rate. Plays a role in control of the cell cycle, stress response, ribosome biogenesis and in those bacteria that undergo differentiation, in morphogenesis control. The polypeptide is GTPase Obg (Beijerinckia indica subsp. indica (strain ATCC 9039 / DSM 1715 / NCIMB 8712)).